The following is a 122-amino-acid chain: Histone H2B subacrosomal variant (122 aa).

The span at 1 to 25 (MARNVTKRNKRCRGHQKAIYKKKSH) shows a compositional bias: basic residues. Residues 1 to 30 (MARNVTKRNKRCRGHQKAIYKKKSHSSSES) are disordered.

This sequence belongs to the histone H2B family. Testis-specific. Restricted to the spermatid population of seminiferous epithelium. Not present in Sertoli cells, spermatogonia, spermatocytes or cells of the interstitial tissue (at protein level).

The protein localises to the cytoplasm. May act as an acrosome-nuclear docking protein in sperm. This is Histone H2B subacrosomal variant (SUBH2BV) from Bos taurus (Bovine).